We begin with the raw amino-acid sequence, 523 residues long: Bifunctional purine biosynthesis protein PurH (523 aa).

One can recognise an MGS-like domain in the interval 1-149 (MSDPVIKRAL…KNNESVTVIT (149 aa)).

The protein belongs to the PurH family.

It carries out the reaction (6R)-10-formyltetrahydrofolate + 5-amino-1-(5-phospho-beta-D-ribosyl)imidazole-4-carboxamide = 5-formamido-1-(5-phospho-D-ribosyl)imidazole-4-carboxamide + (6S)-5,6,7,8-tetrahydrofolate. The catalysed reaction is IMP + H2O = 5-formamido-1-(5-phospho-D-ribosyl)imidazole-4-carboxamide. Its pathway is purine metabolism; IMP biosynthesis via de novo pathway; 5-formamido-1-(5-phospho-D-ribosyl)imidazole-4-carboxamide from 5-amino-1-(5-phospho-D-ribosyl)imidazole-4-carboxamide (10-formyl THF route): step 1/1. It participates in purine metabolism; IMP biosynthesis via de novo pathway; IMP from 5-formamido-1-(5-phospho-D-ribosyl)imidazole-4-carboxamide: step 1/1. This chain is Bifunctional purine biosynthesis protein PurH, found in Chlorobaculum parvum (strain DSM 263 / NCIMB 8327) (Chlorobium vibrioforme subsp. thiosulfatophilum).